We begin with the raw amino-acid sequence, 628 residues long: Monoterpene synthase like 2, chloroplastic (628 aa).

Residues D379, D383, and D531 each contribute to the Mg(2+) site. The DDXXD motif motif lies at D379–D383.

The protein belongs to the terpene synthase family. Tpsd subfamily. Mg(2+) is required as a cofactor. Mn(2+) serves as cofactor.

It localises to the plastid. Its subcellular location is the chloroplast. It participates in terpene metabolism; oleoresin biosynthesis. It functions in the pathway secondary metabolite biosynthesis; terpenoid biosynthesis. Functionally, monoterpene synthase (TPS) involved in the biosynthesis of monoterpene natural products included in conifer oleoresin secretions and volatile emissions; these compounds contribute to biotic and abiotic stress defense against herbivores and pathogens. In Pinus banksiana (Jack pine), this protein is Monoterpene synthase like 2, chloroplastic.